The chain runs to 282 residues: Stress response regulator protein 1 (282 aa).

2 stretches are compositionally biased toward low complexity: residues 12 to 30 (NLSR…HSST) and 45 to 58 (NSQS…SNNN). Disordered stretches follow at residues 12–31 (NLSR…SSTV), 43–84 (DINS…DDED), and 112–139 (LTPF…TTVV). The span at 66-77 (SDYNSYTHNQYY) shows a compositional bias: polar residues. The span at 125-139 (SIISSKSSNKSTTVV) shows a compositional bias: low complexity. The region spanning 155 to 273 (SFLIVDDNII…LDFMANSIDD (119 aa)) is the Response regulatory domain. Position 206 is a 4-aspartylphosphate (D206).

Its function is as follows. Required for stress adaptation, morphogenesis and virulence. This chain is Stress response regulator protein 1 (SRR1), found in Candida albicans (strain SC5314 / ATCC MYA-2876) (Yeast).